The sequence spans 213 residues: uncharacterized protein (213 aa).

Residues G53, E74, and D97 each coordinate S-adenosyl-L-methionine.

This sequence belongs to the methyltransferase superfamily. YrrT family.

In terms of biological role, could be a S-adenosyl-L-methionine-dependent methyltransferase. This is an uncharacterized protein from Geobacillus sp. (strain WCH70).